A 372-amino-acid chain; its full sequence is MKLLQTPLYQECKELGGKMVPFANWEMPVSFSGLIEEHNAVRKNVGMFDISHMGVVQLKGKNIKSALQNLVPSDVFRIGPSEACYTVFLKENGGIQDDLIIYDQGVLDTNEESIVLVINAARKESDIEWLSSNLFKKEITISEFMPEGALIAIQGPESISTLEKILEEPLSNLPRFGHRTITSNPNLINSQESIFIARTGYTGEEGFEFLSSPETAKSIWKSLIASGVTPCGLGARDTLRLEASMHLYGNDINLDTTPFEAGLGWLVHLEMPNDFIGRKALEKQAEVGTQKKLVGIQVLDKGIARKGYPVLYNSETVGIVTSGTWSPTLQKPIALAYVPSEIAKVNTQIEVEIRRKKHPAIIVKRPFYRKGF.

This sequence belongs to the GcvT family. As to quaternary structure, the glycine cleavage system is composed of four proteins: P, T, L and H.

The enzyme catalyses N(6)-[(R)-S(8)-aminomethyldihydrolipoyl]-L-lysyl-[protein] + (6S)-5,6,7,8-tetrahydrofolate = N(6)-[(R)-dihydrolipoyl]-L-lysyl-[protein] + (6R)-5,10-methylene-5,6,7,8-tetrahydrofolate + NH4(+). Its function is as follows. The glycine cleavage system catalyzes the degradation of glycine. The chain is Aminomethyltransferase from Prochlorococcus marinus (strain NATL2A).